We begin with the raw amino-acid sequence, 125 residues long: Cystatin-like cysteine protease inhibitor EPIC2B (125 aa).

The first 21 residues, 1–21 (MSFLRPTLALLAVTALVTTSG), serve as a signal peptide directing secretion. A glycan (N-linked (GlcNAc...) asparagine) is linked at Asn45. The short motif at 68–72 (QVVSG) is the Secondary area of contact element.

This sequence belongs to the cystatin family. As to quaternary structure, interacts with the host papain-like cysteine protease PIP1. Interacts with the host papain-like cysteine protease RCR3. Interacts with the host papain-like cysteine protease C14.

Its subcellular location is the secreted. Secreted effector that interacts with and inhibits the pathogenesis-related papain-like cysteine proteases C14, PIP1 and RCR3 of host plants. Inhibition of host proteases by a pathogen extracellular protease inhibitor forms a specific type of defense-counterdefense mechanism between plants and microbial pathogens. The sequence is that of Cystatin-like cysteine protease inhibitor EPIC2B from Phytophthora infestans (Potato late blight agent).